The chain runs to 170 residues: Lipoprotein signal peptidase (170 aa).

3 helical membrane-spanning segments follow: residues 12–32 (WYWI…WVLS), 67–87 (WQRW…SVWL), and 94–113 (MWRL…GNLI). Active-site residues include Asp-123 and Asp-141. A helical transmembrane segment spans residues 133–153 (HFPAFNIADSAICIGAGLIIL).

Belongs to the peptidase A8 family.

The protein localises to the cell inner membrane. The catalysed reaction is Release of signal peptides from bacterial membrane prolipoproteins. Hydrolyzes -Xaa-Yaa-Zaa-|-(S,diacylglyceryl)Cys-, in which Xaa is hydrophobic (preferably Leu), and Yaa (Ala or Ser) and Zaa (Gly or Ala) have small, neutral side chains.. The protein operates within protein modification; lipoprotein biosynthesis (signal peptide cleavage). Its function is as follows. This protein specifically catalyzes the removal of signal peptides from prolipoproteins. The sequence is that of Lipoprotein signal peptidase from Shewanella piezotolerans (strain WP3 / JCM 13877).